A 229-amino-acid chain; its full sequence is NAD(P)H-quinone oxidoreductase subunit K, chloroplastic (229 aa).

Residues cysteine 43, cysteine 44, cysteine 108, and cysteine 139 each coordinate [4Fe-4S] cluster.

This sequence belongs to the complex I 20 kDa subunit family. As to quaternary structure, NDH is composed of at least 16 different subunits, 5 of which are encoded in the nucleus. Requires [4Fe-4S] cluster as cofactor.

Its subcellular location is the plastid. It localises to the chloroplast thylakoid membrane. It catalyses the reaction a plastoquinone + NADH + (n+1) H(+)(in) = a plastoquinol + NAD(+) + n H(+)(out). It carries out the reaction a plastoquinone + NADPH + (n+1) H(+)(in) = a plastoquinol + NADP(+) + n H(+)(out). NDH shuttles electrons from NAD(P)H:plastoquinone, via FMN and iron-sulfur (Fe-S) centers, to quinones in the photosynthetic chain and possibly in a chloroplast respiratory chain. The immediate electron acceptor for the enzyme in this species is believed to be plastoquinone. Couples the redox reaction to proton translocation, and thus conserves the redox energy in a proton gradient. The sequence is that of NAD(P)H-quinone oxidoreductase subunit K, chloroplastic from Piper cenocladum (Ant piper).